Consider the following 391-residue polypeptide: Polyketide synthase 1 (391 aa).

The active site involves C164.

Belongs to the thiolase-like superfamily. Chalcone/stilbene synthases family. Homodimer. Expressed in fruits.

The enzyme catalyses (E)-4-coumaroyl-CoA + 3 malonyl-CoA + 3 H(+) = 2',4,4',6'-tetrahydroxychalcone + 3 CO2 + 4 CoA. It participates in secondary metabolite biosynthesis; flavonoid biosynthesis. Functionally, polyketide synthase producing naringenin chalcone and slightly p-coumaryltriacetic acid lactone (CTAL). Can use p-coumaryl-CoA as substrate. The sequence is that of Polyketide synthase 1 (PKS1) from Rubus idaeus (Raspberry).